The following is a 173-amino-acid chain: Lipoprotein signal peptidase (173 aa).

4 consecutive transmembrane segments (helical) span residues 7 to 27, 41 to 61, 70 to 90, and 95 to 115; these read FFWFTALLSLLLDHLTKLWVV, LWPGVFHLTYVTNTGAAFSLF, WLSLGVSVGLMALAILGPNFN, and AGYGFLLGGAAGNGIDRFVAG. Residues aspartate 119 and aspartate 135 contribute to the active site. A helical transmembrane segment spans residues 130–150; the sequence is IFNLADVFINIGIICLLIAAW.

It belongs to the peptidase A8 family.

The protein resides in the cell inner membrane. The catalysed reaction is Release of signal peptides from bacterial membrane prolipoproteins. Hydrolyzes -Xaa-Yaa-Zaa-|-(S,diacylglyceryl)Cys-, in which Xaa is hydrophobic (preferably Leu), and Yaa (Ala or Ser) and Zaa (Gly or Ala) have small, neutral side chains.. It functions in the pathway protein modification; lipoprotein biosynthesis (signal peptide cleavage). In terms of biological role, this protein specifically catalyzes the removal of signal peptides from prolipoproteins. The chain is Lipoprotein signal peptidase from Cyanothece sp. (strain PCC 7425 / ATCC 29141).